Here is an 878-residue protein sequence, read N- to C-terminus: Phosphoenolpyruvate carboxylase (878 aa).

Active-site residues include His-140 and Lys-545.

Belongs to the PEPCase type 1 family. The cofactor is Mg(2+).

It carries out the reaction oxaloacetate + phosphate = phosphoenolpyruvate + hydrogencarbonate. Forms oxaloacetate, a four-carbon dicarboxylic acid source for the tricarboxylic acid cycle. The sequence is that of Phosphoenolpyruvate carboxylase from Pseudomonas syringae pv. tomato (strain ATCC BAA-871 / DC3000).